The following is an 84-amino-acid chain: Large ribosomal subunit protein bL27 (84 aa).

The tract at residues 1–21 is disordered; the sequence is MAHKKGASSTRNGRDSNAQRL. A compositionally biased stretch (polar residues) spans 7-19; it reads ASSTRNGRDSNAQ.

Belongs to the bacterial ribosomal protein bL27 family.

This is Large ribosomal subunit protein bL27 from Clavibacter michiganensis subsp. michiganensis (strain NCPPB 382).